Consider the following 1101-residue polypeptide: Cytospin-A (1101 aa).

Disordered stretches follow at residues 1 to 170 (MRKA…NQIS) and 280 to 366 (SDCG…SGNA). Polar residues-rich tracts occupy residues 29–48 (ESSA…LSKA) and 64–86 (ASNS…TAMS). Residues 93–110 (RSSAGSSSNTKRSGSSGA) show a composition bias toward low complexity. Basic and acidic residues-rich tracts occupy residues 114-125 (GSSRERLRERSR) and 151-165 (GRTD…KSKS). Positions 162 to 254 (KSKSDNQISD…LKDRLNALGF (93 aa)) form a coiled coil. A compositionally biased stretch (low complexity) spans 333–355 (LTSSDDALDAPSSSSESEGLPST). 2 coiled-coil regions span residues 373–427 (CLTE…MDSL) and 492–785 (QHLS…RGRV). Residues 923–978 (SISVSRRSSEELKRDISVPDGSSAPSLMVMTSPSPQLSLSSSSPTASVTPTARSRI) form a disordered region. The segment covering 929-939 (RSSEELKRDIS) has biased composition (basic and acidic residues). Positions 953–975 (TSPSPQLSLSSSSPTASVTPTAR) are enriched in low complexity. The Calponin-homology (CH) domain maps to 995–1100 (GSKRNALLKW…YVTSIYKYFE (106 aa)).

The protein belongs to the cytospin-A family. May interact with both microtubules and actin cytoskeleton.

It localises to the cytoplasm. The protein resides in the cytoskeleton. Its subcellular location is the spindle. The protein localises to the cell junction. It is found in the gap junction. Functionally, involved in cytokinesis and spindle organization. May play a role in actin cytoskeleton organization and microtubule stabilization and hence required for proper cell adhesion and migration. The sequence is that of Cytospin-A (specc1l) from Xenopus tropicalis (Western clawed frog).